A 475-amino-acid chain; its full sequence is Adenosylhomocysteinase (475 aa).

3 residues coordinate substrate: Thr61, Asp140, and Glu200. Residue 201–203 (TTT) participates in NAD(+) binding. Residues Lys230 and Asp234 each contribute to the substrate site. NAD(+) is bound by residues Asn235, 264–269 (GYGDVG), Glu287, Asn322, 343–345 (IGH), and Asn388.

It belongs to the adenosylhomocysteinase family. NAD(+) is required as a cofactor.

It localises to the cytoplasm. The catalysed reaction is S-adenosyl-L-homocysteine + H2O = L-homocysteine + adenosine. It participates in amino-acid biosynthesis; L-homocysteine biosynthesis; L-homocysteine from S-adenosyl-L-homocysteine: step 1/1. In terms of biological role, may play a key role in the regulation of the intracellular concentration of adenosylhomocysteine. The polypeptide is Adenosylhomocysteinase (Paracidovorax citrulli (strain AAC00-1) (Acidovorax citrulli)).